Consider the following 348-residue polypeptide: Dihydroorotase (348 aa).

Positions 17 and 19 each coordinate Zn(2+). Substrate contacts are provided by residues 19–21 (HLR) and asparagine 45. Zn(2+)-binding residues include lysine 103, histidine 140, and histidine 178. Lysine 103 carries the post-translational modification N6-carboxylysine. Histidine 140 serves as a coordination point for substrate. Substrate is bound at residue leucine 223. Aspartate 251 contributes to the Zn(2+) binding site. Residue aspartate 251 is part of the active site. Residues histidine 255 and alanine 267 each contribute to the substrate site.

The protein belongs to the metallo-dependent hydrolases superfamily. DHOase family. Class II DHOase subfamily. Homodimer. Zn(2+) serves as cofactor.

The enzyme catalyses (S)-dihydroorotate + H2O = N-carbamoyl-L-aspartate + H(+). It participates in pyrimidine metabolism; UMP biosynthesis via de novo pathway; (S)-dihydroorotate from bicarbonate: step 3/3. Catalyzes the reversible cyclization of carbamoyl aspartate to dihydroorotate. In Cronobacter sakazakii (strain ATCC BAA-894) (Enterobacter sakazakii), this protein is Dihydroorotase.